Consider the following 880-residue polypeptide: Alanine--tRNA ligase (880 aa).

His566, His570, Cys668, and His672 together coordinate Zn(2+).

The protein belongs to the class-II aminoacyl-tRNA synthetase family. Zn(2+) serves as cofactor.

The protein localises to the cytoplasm. The catalysed reaction is tRNA(Ala) + L-alanine + ATP = L-alanyl-tRNA(Ala) + AMP + diphosphate. Functionally, catalyzes the attachment of alanine to tRNA(Ala) in a two-step reaction: alanine is first activated by ATP to form Ala-AMP and then transferred to the acceptor end of tRNA(Ala). Also edits incorrectly charged Ser-tRNA(Ala) and Gly-tRNA(Ala) via its editing domain. The chain is Alanine--tRNA ligase from Alkaliphilus oremlandii (strain OhILAs) (Clostridium oremlandii (strain OhILAs)).